The sequence spans 644 residues: DNA mismatch repair protein MutL (644 aa).

2 disordered regions span residues 338–390 and 416–445; these read RPNA…ERPA and QPQEAAEEAAGTPAPPASSSPAMAETDDTQ. 2 stretches are compositionally biased toward low complexity: residues 349 to 366 and 416 to 427; these read EATPSTDATTATAAEASA and QPQEAAEEAAGT.

It belongs to the DNA mismatch repair MutL/HexB family.

Its function is as follows. This protein is involved in the repair of mismatches in DNA. It is required for dam-dependent methyl-directed DNA mismatch repair. May act as a 'molecular matchmaker', a protein that promotes the formation of a stable complex between two or more DNA-binding proteins in an ATP-dependent manner without itself being part of a final effector complex. The chain is DNA mismatch repair protein MutL from Chromohalobacter salexigens (strain ATCC BAA-138 / DSM 3043 / CIP 106854 / NCIMB 13768 / 1H11).